A 417-amino-acid polypeptide reads, in one-letter code: MAEIKNYTLNFGPQHPAAHGVLRLVLELDGEVIQRADPHIGLLHRATEKLAENKTFIQSVPYMDRLDYVSMMVNEHGYVLAIEKLLGIAVPERAQYIRVLFDEITRVLNHLMWIGAHALDVGAMAVFLYAFREREDLMDVYEAVSGARMHAAYYRPGGVYRDLPDAMPQYKASKIRNEKALAKMNEARSGSVLDFIDDFFTRFPKCIDEYETLLTDNRIWKQRLVGIGVVSPERALQMGLTGPMLRGSGIAWDLRKKQPYEVYDRMDFDVPVGVNGDCYDRYLVRVEEMRQSVRIAKQCIEWLRKNPGPVMTDNHKVAPPSRVGMKTNMEDLIHHFKLFTEGFHVPEGEAYAAVEHPKGEFGIYLVSDGANKPYRLKIRAPGFAHLASLDEMARGHMIADAVTIIGTQDIVFGEIDR.

The protein belongs to the complex I 49 kDa subunit family. In terms of assembly, NDH-1 is composed of 14 different subunits. Subunits NuoB, C, D, E, F, and G constitute the peripheral sector of the complex.

Its subcellular location is the cell inner membrane. The enzyme catalyses a quinone + NADH + 5 H(+)(in) = a quinol + NAD(+) + 4 H(+)(out). Functionally, NDH-1 shuttles electrons from NADH, via FMN and iron-sulfur (Fe-S) centers, to quinones in the respiratory chain. The immediate electron acceptor for the enzyme in this species is believed to be ubiquinone. Couples the redox reaction to proton translocation (for every two electrons transferred, four hydrogen ions are translocated across the cytoplasmic membrane), and thus conserves the redox energy in a proton gradient. In Burkholderia multivorans (strain ATCC 17616 / 249), this protein is NADH-quinone oxidoreductase subunit D.